Consider the following 327-residue polypeptide: WRKY transcription factor WRKY76 (327 aa).

Positions 56–76 (AKILEAKVTQMSEENRRLTEV) form a coiled coil. The disordered stretch occupies residues 88-134 (LGLDGSASPPRPVSPLSGKKRSRESMETANSCDANSNRHQGGDADHA). The Nuclear localization signal signature appears at 106–112 (KKRSRES). A compositionally biased stretch (polar residues) spans 114-126 (ETANSCDANSNRH). Positions 160–226 (DTSLVVKDGY…YEGEHNHPHP (67 aa)) form a DNA-binding region, WRKY.

It belongs to the WRKY group II-a family.

It is found in the nucleus. Its function is as follows. Transcription repressor. Interacts specifically with the W box (5'-(T)TGAC[CT]-3'), a frequently occurring elicitor-responsive cis-acting element. Regulates, probably indirectly, the activation of defense-related genes during defense response. Modulates plant innate immunity against X.oryzae pv. oryzae (Xoo). This is WRKY transcription factor WRKY76 from Oryza sativa subsp. indica (Rice).